The chain runs to 256 residues: Pyridoxine 5'-phosphate synthase (256 aa).

Asn-12 is a 3-amino-2-oxopropyl phosphate binding site. 14 to 15 lines the 1-deoxy-D-xylulose 5-phosphate pocket; that stretch reads DH. Residue Arg-23 participates in 3-amino-2-oxopropyl phosphate binding. The active-site Proton acceptor is the His-48. 1-deoxy-D-xylulose 5-phosphate is bound by residues Arg-50 and His-55. Glu-75 serves as the catalytic Proton acceptor. Thr-105 contributes to the 1-deoxy-D-xylulose 5-phosphate binding site. His-199 functions as the Proton donor in the catalytic mechanism. 3-amino-2-oxopropyl phosphate is bound by residues Gly-200 and 221–222; that span reads GY.

Belongs to the PNP synthase family. As to quaternary structure, homooctamer; tetramer of dimers.

The protein resides in the cytoplasm. The enzyme catalyses 3-amino-2-oxopropyl phosphate + 1-deoxy-D-xylulose 5-phosphate = pyridoxine 5'-phosphate + phosphate + 2 H2O + H(+). The protein operates within cofactor biosynthesis; pyridoxine 5'-phosphate biosynthesis; pyridoxine 5'-phosphate from D-erythrose 4-phosphate: step 5/5. In terms of biological role, catalyzes the complicated ring closure reaction between the two acyclic compounds 1-deoxy-D-xylulose-5-phosphate (DXP) and 3-amino-2-oxopropyl phosphate (1-amino-acetone-3-phosphate or AAP) to form pyridoxine 5'-phosphate (PNP) and inorganic phosphate. This Bradyrhizobium sp. (strain ORS 278) protein is Pyridoxine 5'-phosphate synthase.